We begin with the raw amino-acid sequence, 57 residues long: Small ribosomal subunit protein bS21 (57 aa).

Residues 32-57 (VRKRKHFEKPSVKRKKKSEAARKRKF) form a disordered region. Positions 33–57 (RKRKHFEKPSVKRKKKSEAARKRKF) are enriched in basic residues.

Belongs to the bacterial ribosomal protein bS21 family.

The protein is Small ribosomal subunit protein bS21 of Shouchella clausii (strain KSM-K16) (Alkalihalobacillus clausii).